The sequence spans 201 residues: FMN-dependent NADH:quinone oxidoreductase (201 aa).

FMN-binding positions include serine 10, serine 16–serine 18, methionine 96–phenylalanine 99, and serine 140–glycine 143.

This sequence belongs to the azoreductase type 1 family. As to quaternary structure, homodimer. It depends on FMN as a cofactor.

The catalysed reaction is 2 a quinone + NADH + H(+) = 2 a 1,4-benzosemiquinone + NAD(+). It catalyses the reaction N,N-dimethyl-1,4-phenylenediamine + anthranilate + 2 NAD(+) = 2-(4-dimethylaminophenyl)diazenylbenzoate + 2 NADH + 2 H(+). Functionally, quinone reductase that provides resistance to thiol-specific stress caused by electrophilic quinones. In terms of biological role, also exhibits azoreductase activity. Catalyzes the reductive cleavage of the azo bond in aromatic azo compounds to the corresponding amines. The protein is FMN-dependent NADH:quinone oxidoreductase of Shigella boydii serotype 4 (strain Sb227).